An 86-amino-acid polypeptide reads, in one-letter code: Large ribosomal subunit protein bL27 (86 aa).

The interval 1 to 21 (MAHKKGGGSSRNGRDSESKRL) is disordered.

Belongs to the bacterial ribosomal protein bL27 family.

The protein is Large ribosomal subunit protein bL27 of Rubrobacter xylanophilus (strain DSM 9941 / JCM 11954 / NBRC 16129 / PRD-1).